A 776-amino-acid chain; its full sequence is MVPLRSFVLLNSLFLVLLAARTVVTRVIDKDNSDRIVKTQNDQNLSKVPFNLEETYTADFLAYVFNGTWTSDTTIVYTDRRTGDILQFDVIKQRSTLIVDSSVMDAYIVSNYVLSPKGRYLLIGYDLKKGYRYSTFMRYVIYDIEHRAYHKIGNDMHIALAKWAPLTDDLIYILDNDIYYMRFSNNGFNDVQRVTYDGISGIVYNGVPDWVYEEEVLQDSSAIWFSPDGNHLAYASFDDRNVQEILYLHYGEPGNLDDQYPTEVKIKYPKVGTLNPVVSLTLVDLHDPTLNKIDLKAPHYAVGTDNLLYNVQWKDFDHVVVTWSNRVQNKTEIVWYNMYGEIVKTLHVVEHKGWLDIKHLFFYKGSVYIRKLQPSGTKAGRFHHVTRYDETFKQSPTQMDLTPDAIEVQNICTIDQSNGRIYYLASGLGKPSQKNLYSVPADGSEKPTCISCNVLTPEGNVCTYADAIFSPLGQYYVLVCHGPDPAFVSIFNNAHQKVYSWENNLSLRKKLAKRHLPLVKDLDVRANGYESKVRLFLPHNFDESKSYPMLVNVYAGPNTLKIIDAASYGHQVYMTTNRSVIYAYIDGRGSSNKGSKMLFSIYRKLGTVEVEDQITVTRQLQEMFPWIDSKRTGVWGWSYGGFSTAMILAKDTSFVFKCGIAIAPVSSWIYYDSIYTERFMGFPTPEDNLSGYNETDVSRRVEDIRGKKFMLIHGSGDDNVHYQQSLALAKALEKADVMFEQITYTDEAHALFGVLPHLYHTMDRFWSDCFSLSHAH.

Residues 1–25 (MVPLRSFVLLNSLFLVLLAARTVVT) form the signal peptide. Asn-44, Asn-66, and Asn-329 each carry an N-linked (GlcNAc...) asparagine glycan. Intrachain disulfides connect Cys-449–Cys-452 and Cys-462–Cys-480. Asn-504 and Asn-577 each carry an N-linked (GlcNAc...) asparagine glycan. The active-site Charge relay system is the Ser-638. Residues Cys-658 and Cys-769 are joined by a disulfide bond. N-linked (GlcNAc...) asparagine glycans are attached at residues Asn-688 and Asn-693. Active-site charge relay system residues include Asp-717 and His-749.

The protein belongs to the peptidase S9B family. DPPIV subfamily. In terms of tissue distribution, expressed by the venom gland.

The protein resides in the secreted. It catalyses the reaction Release of an N-terminal dipeptide, Xaa-Yaa-|-Zaa-, from a polypeptide, preferentially when Yaa is Pro, provided Zaa is neither Pro nor hydroxyproline.. Its activity is regulated as follows. Inhibited by diprotin A. Functionally, venom dipeptidyl-peptidase which removes N-terminal dipeptides sequentially from polypeptides having unsubstituted N-termini provided that the penultimate residue is proline. May process venom proteins into their active forms and/or modulate the chemotactic activity of immune cells after the insect sting. The chain is Venom dipeptidyl peptidase 4 from Vespula vulgaris (Yellow jacket).